Consider the following 474-residue polypeptide: tRNA-2-methylthio-N(6)-dimethylallyladenosine synthase (474 aa).

In terms of domain architecture, MTTase N-terminal spans 3–120; the sequence is KKLHIKTWGC…LPEMIEQIQQ (118 aa). Residues C12, C49, C83, C157, C161, and C164 each coordinate [4Fe-4S] cluster. The Radical SAM core domain maps to 143–375; the sequence is RAEGPSAFVS…QDRITQQAMR (233 aa). One can recognise a TRAM domain in the interval 378–441; it reads RQMLGTVQRI…TNSLRGKFIR (64 aa).

Belongs to the methylthiotransferase family. MiaB subfamily. As to quaternary structure, monomer. [4Fe-4S] cluster serves as cofactor.

It localises to the cytoplasm. The catalysed reaction is N(6)-dimethylallyladenosine(37) in tRNA + (sulfur carrier)-SH + AH2 + 2 S-adenosyl-L-methionine = 2-methylsulfanyl-N(6)-dimethylallyladenosine(37) in tRNA + (sulfur carrier)-H + 5'-deoxyadenosine + L-methionine + A + S-adenosyl-L-homocysteine + 2 H(+). Functionally, catalyzes the methylthiolation of N6-(dimethylallyl)adenosine (i(6)A), leading to the formation of 2-methylthio-N6-(dimethylallyl)adenosine (ms(2)i(6)A) at position 37 in tRNAs that read codons beginning with uridine. The chain is tRNA-2-methylthio-N(6)-dimethylallyladenosine synthase from Shewanella loihica (strain ATCC BAA-1088 / PV-4).